Consider the following 230-residue polypeptide: Cytidylate kinase (230 aa).

12 to 20 (GPSGAGKGT) provides a ligand contact to ATP.

It belongs to the cytidylate kinase family. Type 1 subfamily.

It is found in the cytoplasm. The catalysed reaction is CMP + ATP = CDP + ADP. It carries out the reaction dCMP + ATP = dCDP + ADP. The protein is Cytidylate kinase of Shewanella sp. (strain MR-7).